The primary structure comprises 629 residues: Phosphomethylpyrimidine synthase (629 aa).

A compositionally biased stretch (polar residues) spans 1–13 (MTTKSKNAINLSD). The interval 1-22 (MTTKSKNAINLSDSAKVDEQSV) is disordered. Substrate contacts are provided by residues Asn-233, Met-262, Tyr-291, His-327, 347-349 (SRG), 388-391 (DGLR), and Glu-427. Position 431 (His-431) interacts with Zn(2+). Position 454 (Tyr-454) interacts with substrate. His-495 lines the Zn(2+) pocket. [4Fe-4S] cluster is bound by residues Cys-575, Cys-578, and Cys-583.

Belongs to the ThiC family. Homodimer. [4Fe-4S] cluster is required as a cofactor.

The catalysed reaction is 5-amino-1-(5-phospho-beta-D-ribosyl)imidazole + S-adenosyl-L-methionine = 4-amino-2-methyl-5-(phosphooxymethyl)pyrimidine + CO + 5'-deoxyadenosine + formate + L-methionine + 3 H(+). Its pathway is cofactor biosynthesis; thiamine diphosphate biosynthesis. Catalyzes the synthesis of the hydroxymethylpyrimidine phosphate (HMP-P) moiety of thiamine from aminoimidazole ribotide (AIR) in a radical S-adenosyl-L-methionine (SAM)-dependent reaction. This Pseudomonas fluorescens (strain Pf0-1) protein is Phosphomethylpyrimidine synthase.